The chain runs to 288 residues: Mycothiol S-conjugate amidase (288 aa).

Positions 12, 15, and 142 each coordinate Zn(2+).

The protein belongs to the MshB deacetylase family. Mca subfamily. In terms of assembly, monomer. Zn(2+) serves as cofactor.

The catalysed reaction is mycothiol S-conjugate + H2O = an N-acetyl-L-cysteine-S-conjugate + 1D-myo-inositol 2-amino-2-deoxy-alpha-D-glucopyranoside. With respect to regulation, partially inhibited by MSH when MSmB is used as substrate. Competitively inhibited by the GlcNAc-cyclohexyl derivative 5-(4-chlorophenyl)-N-((2R,3R,4R,5S,6R)-2-(cyclohexylthio)-tetrahydro-4,5-dihydroxy-6-(hydroxymethyl)-2H-pyran-3-yl)furan-2-carboxamide, which also inhibits MshB. Functionally, a mycothiol (MSH, N-acetyl-cysteinyl-glucosaminyl-inositol) S-conjugate amidase, it recycles conjugated MSH to the N-acetyl cysteine conjugate and the MSH precursor. Involved in MSH-dependent detoxification of a number of alkylating agents and antibiotics. Activity is specific for the mycothiol moiety. Has a low but measurable deacetylation activity on GlcNAc-Ins (N-acetyl-glucosaminyl-inositol), and thus can also directly contribute to the production of MSH. This Mycobacterium tuberculosis (strain ATCC 25618 / H37Rv) protein is Mycothiol S-conjugate amidase.